The following is a 309-amino-acid chain: Protein FdhE (309 aa).

Belongs to the FdhE family.

Its subcellular location is the cytoplasm. Necessary for formate dehydrogenase activity. The chain is Protein FdhE from Salmonella enteritidis PT4 (strain P125109).